The following is a 188-amino-acid chain: Elongation factor P (188 aa).

The protein belongs to the elongation factor P family.

It localises to the cytoplasm. Its pathway is protein biosynthesis; polypeptide chain elongation. In terms of biological role, involved in peptide bond synthesis. Stimulates efficient translation and peptide-bond synthesis on native or reconstituted 70S ribosomes in vitro. Probably functions indirectly by altering the affinity of the ribosome for aminoacyl-tRNA, thus increasing their reactivity as acceptors for peptidyl transferase. This Bradyrhizobium diazoefficiens (strain JCM 10833 / BCRC 13528 / IAM 13628 / NBRC 14792 / USDA 110) protein is Elongation factor P.